The primary structure comprises 304 residues: Mycothiol acetyltransferase (304 aa).

2 N-acetyltransferase domains span residues 16 to 155 and 164 to 304; these read AHVE…RTGL and VALS…YRRA. E46 serves as a coordination point for 1D-myo-inositol 2-(L-cysteinylamino)-2-deoxy-alpha-D-glucopyranoside. Acetyl-CoA is bound at residue 87–89; that stretch reads LVV. Residues E190, K230, and E237 each coordinate 1D-myo-inositol 2-(L-cysteinylamino)-2-deoxy-alpha-D-glucopyranoside. Residues 241–243 and 248–254 each bind acetyl-CoA; these read LGV and AARGLGS. Position 275 (Y275) interacts with 1D-myo-inositol 2-(L-cysteinylamino)-2-deoxy-alpha-D-glucopyranoside.

The protein belongs to the acetyltransferase family. MshD subfamily. As to quaternary structure, monomer.

The catalysed reaction is 1D-myo-inositol 2-(L-cysteinylamino)-2-deoxy-alpha-D-glucopyranoside + acetyl-CoA = mycothiol + CoA + H(+). In terms of biological role, catalyzes the transfer of acetyl from acetyl-CoA to desacetylmycothiol (Cys-GlcN-Ins) to form mycothiol. The sequence is that of Mycothiol acetyltransferase from Clavibacter sepedonicus (Clavibacter michiganensis subsp. sepedonicus).